Reading from the N-terminus, the 1047-residue chain is FACT complex subunit SPT16 (1047 aa).

Residue A2 is modified to N-acetylalanine. K139 bears the N6-acetyllysine mark. S188 carries the phosphoserine modification. An N6-acetyllysine mark is found at K196 and K223. The stretch at 432–507 (LKNEDEEEEE…GEQQIQKARK (76 aa)) forms a coiled coil. Phosphoserine is present on S455. A disordered region spans residues 492 to 518 (RLTEQKGEQQIQKARKSNVSYKNPSLM). K497 is covalently cross-linked (Glycyl lysine isopeptide (Lys-Gly) (interchain with G-Cter in SUMO2)). Residues 499–514 (EQQIQKARKSNVSYKN) are compositionally biased toward polar residues. S508 is modified (phosphoserine). K513 carries the N6-acetyllysine; alternate modification. A Glycyl lysine isopeptide (Lys-Gly) (interchain with G-Cter in SUMO2); alternate cross-link involves residue K513. Residue K647 forms a Glycyl lysine isopeptide (Lys-Gly) (interchain with G-Cter in SUMO2) linkage. S650 and S658 each carry phosphoserine. K732 and K786 each carry N6-acetyllysine. At T903 the chain carries Phosphothreonine. Position 904 is an N6-acetyllysine (K904). The interval 918-1047 (EQGGWSFLEP…SSAPPKKKRK (130 aa)) is disordered. Acidic residues predominate over residues 927–973 (PEGEGSDAEEGDSESEIEDETFNPSEDDYEEEEEDSDEDYSSEAEES). Phosphoserine occurs at positions 979, 982, 986, and 1015. The span at 985 to 1005 (ESGKDWDELEEEARKADRESR) shows a compositional bias: basic and acidic residues. Over residues 1024-1039 (VHSSGRGSNRGSRHSS) the composition is skewed to low complexity.

It belongs to the peptidase M24 family. SPT16 subfamily. Interacts with MYOG (via C-terminal region). Component of the FACT complex, a stable heterodimer of SSRP1 and SUPT16H. Also a component of a CK2-SPT16-SSRP1 complex which forms following UV irradiation, composed of SSRP1, SUPT16H, CSNK2A1, CSNK2A2 and CSNK2B. Interacts with NEK9. Binds to histone H2A-H2B. Identified in a centromere complex containing histones H2A, H2B and H4, and at least CENPA, CENPB, CENPC, CENPT, CENPN, HJURP, SUPT16H, SSRP1 and RSF1. Interacts with GTF2E2. As to quaternary structure, (Microbial infection) Interacts with Herpes simplex virus 1 (HHV-1) protein ICP22; this interaction relocalizes the FACT complex to viral genomes in infected cells. Post-translationally, ADP-ribosylated. ADP-ribosylation by PARP1 is induced by genotoxic stress and correlates with dissociation of FACT from chromatin. In terms of tissue distribution, ubiquitous.

The protein localises to the nucleus. Its subcellular location is the chromosome. Component of the FACT complex, a general chromatin factor that acts to reorganize nucleosomes. The FACT complex is involved in multiple processes that require DNA as a template such as mRNA elongation, DNA replication and DNA repair. During transcription elongation the FACT complex acts as a histone chaperone that both destabilizes and restores nucleosomal structure. It facilitates the passage of RNA polymerase II and transcription by promoting the dissociation of one histone H2A-H2B dimer from the nucleosome, then subsequently promotes the reestablishment of the nucleosome following the passage of RNA polymerase II. The FACT complex is probably also involved in phosphorylation of 'Ser-392' of p53/TP53 via its association with CK2 (casein kinase II). In Homo sapiens (Human), this protein is FACT complex subunit SPT16 (SUPT16H).